Consider the following 80-residue polypeptide: Putative membrane protein insertion efficiency factor (80 aa).

A disordered region spans residues 61–80 (KTGKDPVPDHFSLKRNQEGE). Over residues 62 to 80 (TGKDPVPDHFSLKRNQEGE) the composition is skewed to basic and acidic residues.

This sequence belongs to the UPF0161 family.

It localises to the cell membrane. Could be involved in insertion of integral membrane proteins into the membrane. The sequence is that of Putative membrane protein insertion efficiency factor from Streptococcus pneumoniae (strain 70585).